The chain runs to 313 residues: Short-chain dehydrogenase/reductase family 9C member 7 (313 aa).

An NADP(+)-binding site is contributed by 29–53 (FITGCDSGFGNLLAKQLVDRGMKVL). Ser160 contacts substrate. Tyr172 serves as the catalytic Proton acceptor. Ser185 bears the Phosphoserine mark.

Belongs to the short-chain dehydrogenases/reductases (SDR) family. In terms of tissue distribution, highly expressed in liver.

The protein localises to the cytoplasm. The enzyme catalyses a N-[omega-(9R,10R)-epoxy-(13R)-hydroxy-(11E)-octadecenoyloxy]acyl-beta-D-glucosyl-(1&lt;-&gt;1)-sphing-4E-enine + NAD(+) = a N-[omega-(9R,10R)-epoxy-13-oxo-(11E)-octadecenoyloxy]acyl-beta-D-glucosyl-(1&lt;-&gt;1)-sphing-4E-enine + NADH + H(+). It catalyses the reaction a N-[omega-(9R,10R)-epoxy-(13R)-hydroxy-(11E)-octadecenoyloxy]-acylsphing-4E-enine + NAD(+) = a N-[omega-(9R,10R)-epoxy-13-oxo-(11E)-octadecenoyloxy]-acylsphing-4E-enine + NADH + H(+). Its function is as follows. Plays a crucial role in the formation of the epidermal permeability barrier. Catalyzes the NAD+-dependent dehydrogenation of the linoleate 9,10-trans-epoxy-11E-13-alcohol esterified in omega-O-acylceramides (such as in N-[omega-(9R,10R)-epoxy-(13R)-hydroxy-(11E)-octadecenoyloxy]-acylsphing-4E-enine) to the corresponding 13-ketone, the reactive moiety required for binding of epidermal ceramides to proteins. Displays weak conversion of all-trans-retinal to all-trans-retinol in the presence of NADH. Has apparently no steroid dehydrogenase activity. This is Short-chain dehydrogenase/reductase family 9C member 7 (Sdr9c7) from Mus musculus (Mouse).